A 431-amino-acid chain; its full sequence is 3-phosphoshikimate 1-carboxyvinyltransferase (431 aa).

Lys-21, Ser-22, and Arg-26 together coordinate 3-phosphoshikimate. Residue Lys-21 participates in phosphoenolpyruvate binding. Residues Gly-93 and Arg-121 each contribute to the phosphoenolpyruvate site. Residues Ser-166, Gln-168, Ser-192, Asp-317, and Lys-344 each contribute to the 3-phosphoshikimate site. Gln-168 provides a ligand contact to phosphoenolpyruvate. Asp-317 (proton acceptor) is an active-site residue. Phosphoenolpyruvate contacts are provided by Arg-348 and Arg-390.

The protein belongs to the EPSP synthase family. In terms of assembly, monomer.

It is found in the cytoplasm. It carries out the reaction 3-phosphoshikimate + phosphoenolpyruvate = 5-O-(1-carboxyvinyl)-3-phosphoshikimate + phosphate. It participates in metabolic intermediate biosynthesis; chorismate biosynthesis; chorismate from D-erythrose 4-phosphate and phosphoenolpyruvate: step 6/7. Its function is as follows. Catalyzes the transfer of the enolpyruvyl moiety of phosphoenolpyruvate (PEP) to the 5-hydroxyl of shikimate-3-phosphate (S3P) to produce enolpyruvyl shikimate-3-phosphate and inorganic phosphate. The protein is 3-phosphoshikimate 1-carboxyvinyltransferase of Herpetosiphon aurantiacus (strain ATCC 23779 / DSM 785 / 114-95).